The primary structure comprises 461 residues: tRNA modification GTPase MnmE (461 aa).

(6S)-5-formyl-5,6,7,8-tetrahydrofolate contacts are provided by R22, E87, and R126. The 161-residue stretch at 222 to 382 (GITAVIAGKP…LENKLYEILI (161 aa)) folds into the TrmE-type G domain. K(+) is bound at residue N232. Residues 232-237 (NVGKSS), 251-257 (TDIPGTT), 276-279 (DTAG), and 363-365 (SAR) contribute to the GTP site. Residue S236 coordinates Mg(2+). Positions 251, 253, and 256 each coordinate K(+). A Mg(2+)-binding site is contributed by T257. (6S)-5-formyl-5,6,7,8-tetrahydrofolate is bound at residue K461.

This sequence belongs to the TRAFAC class TrmE-Era-EngA-EngB-Septin-like GTPase superfamily. TrmE GTPase family. Homodimer. Heterotetramer of two MnmE and two MnmG subunits. Requires K(+) as cofactor.

The protein localises to the cytoplasm. Its function is as follows. Exhibits a very high intrinsic GTPase hydrolysis rate. Involved in the addition of a carboxymethylaminomethyl (cmnm) group at the wobble position (U34) of certain tRNAs, forming tRNA-cmnm(5)s(2)U34. This chain is tRNA modification GTPase MnmE, found in Carboxydothermus hydrogenoformans (strain ATCC BAA-161 / DSM 6008 / Z-2901).